Consider the following 177-residue polypeptide: Macro domain-containing protein in non 5'region (177 aa).

A Macro domain is found at 1 to 177 (MSTSVSPVVR…VEFEEVLAMR (177 aa)).

This sequence belongs to the MacroD-type family.

The protein is Macro domain-containing protein in non 5'region of Streptomyces griseus.